A 2167-amino-acid chain; its full sequence is Myosin-VIIa (2167 aa).

In terms of domain architecture, Myosin motor spans 63-733; the sequence is QGVEDMISLG…HDLFLEQERD (671 aa). 156–163 is an ATP binding site; the sequence is GESGAGKT. Actin-binding stretches follow at residues 612 to 634 and 712 to 726; these read LDAL…KPNE and QLGH…AHDL. 4 consecutive IQ domains span residues 736 to 758, 759 to 788, 805 to 827, and 828 to 857; these read LTRK…RFLR, LRAA…GYMR, LRGH…EYGH, and KMWA…EHKQ. A coiled-coil region spans residues 886–919; that stretch reads QHYRDRLHELERREIQEQLENRRRVEVNMNIIND. Residues 1008–1245 form the MyTH4 1 domain; the sequence is YAKKALKHPL…PSWLELQATK (238 aa). The region spanning 1250-1560 is the FERM 1 domain; it reads IMLPITFMDG…YFLDGLKKRS (311 aa). Positions 1558-1627 constitute an SH3 domain; sequence KRSKYVIALQ…PAETVYVLPT (70 aa). Phosphoserine is present on residues Ser-1651 and Ser-1654. Positions 1701–1849 constitute a MyTH4 2 domain; the sequence is YSRDPIKAPL…PHQVEVEAIQ (149 aa). The 304-residue stretch at 1855-2158 folds into the FERM 2 domain; the sequence is IFHKVYFPDD…SYISLMLTNM (304 aa). Thr-2045 bears the Phosphothreonine mark.

It belongs to the TRAFAC class myosin-kinesin ATPase superfamily. Myosin family. Homodimerizes in a two headed molecule through the formation of a coiled-coil rod. Homodimers motility is approximately 8-10 times slower than that of myosin V, and its step size is 30 nm, which is consistent with the presence of five IQ motifs in its neck region. Interacts with Cad99C (via the cytoplasmic domain). Interacts with zip and Sans. Expressed in the setae, micro- and macrochaetae on the head, thorax and wing.

It is found in the cytoplasm. It localises to the cell cortex. The protein localises to the cell projection. Its subcellular location is the microvillus. In terms of biological role, myosins are actin-based motor molecules with ATPase activity. Unconventional myosins serve in intracellular movements: can function in cells as a single-molecule cargo transporter. A very slow and high-duty-ratio motor, may be suitable for tension maintenance of actin filaments. Their highly divergent tails are presumed to bind to membranous compartments, which would be moved relative to actin filaments. Plays a key role in the formation of cellular projections and other actin-based functions required for embryonic and larval viability. Necessary for auditory transduction: plays a role in Johnston's organ organization by functioning in scolopidial apical attachment and therefore to acoustic stimulus propagation from the antenna a2/a3 joint to transducing elements. Interaction with the myosin zip may be important for its function in scolopidial apical attachment. During oogenesis it has Cad99c-dependent and Cad99c-independent roles in regulating the shape and spacing of the follicle cell microvilli which secrete eggshell material such as the vitelline membrane. May be required for the normal expression of Cad99c in the follicle cell microvilli. This is Myosin-VIIa from Drosophila melanogaster (Fruit fly).